The primary structure comprises 81 residues: Beta-defensin 34 (81 aa).

An N-terminal signal peptide occupies residues 1–20 (MKTFLFLFAVLFFWSQPRMH). 3 cysteine pairs are disulfide-bonded: C28-C55, C35-C49, and C39-C56. Residues 62–72 (CGRSKGNQSDE) are compositionally biased toward polar residues. The tract at residues 62-81 (CGRSKGNQSDEGSGHMGTRG) is disordered.

Belongs to the beta-defensin family. In terms of tissue distribution, only expressed in epididymis (caput, corpus and cauda).

The protein localises to the secreted. Its function is as follows. Has antibacterial activity. In Mus musculus (Mouse), this protein is Beta-defensin 34 (Defb34).